The chain runs to 277 residues: NH(3)-dependent NAD(+) synthetase (277 aa).

Position 46–53 (46–53 (GISGGQDS)) interacts with ATP. Asp-52 is a Mg(2+) binding site. Position 142 (Arg-142) interacts with deamido-NAD(+). An ATP-binding site is contributed by Thr-162. Glu-167 provides a ligand contact to Mg(2+). Residues Lys-175 and Asp-182 each contribute to the deamido-NAD(+) site. Residues Lys-191 and Thr-213 each coordinate ATP. Deamido-NAD(+) is bound at residue 263 to 264 (HK).

It belongs to the NAD synthetase family. In terms of assembly, homodimer.

It carries out the reaction deamido-NAD(+) + NH4(+) + ATP = AMP + diphosphate + NAD(+) + H(+). It functions in the pathway cofactor biosynthesis; NAD(+) biosynthesis; NAD(+) from deamido-NAD(+) (ammonia route): step 1/1. Its function is as follows. Catalyzes the ATP-dependent amidation of deamido-NAD to form NAD. Uses ammonia as a nitrogen source. This is NH(3)-dependent NAD(+) synthetase from Corynebacterium glutamicum (strain R).